Here is a 495-residue protein sequence, read N- to C-terminus: MDSVRRTYTIMRGRHIDKRVPSKEFLSALDKAETAVRLPTGTGKDCGNPSWKRSLPHVLVASLTSLLFGYHLGVVNETLESISIDLGFSGNTIAEGLVVSTCLGGAFIGSLFSGLVADGVGRRRAFQLSALPMIVGASVSASTESLMGMLLGRFLVGIGMGIGPSVTALYVTEVSPAYVRGTYGSSTQIATCIGLLGSLFAGIPAKDNLGWWRICFWISTVPAAMLAVFMELCVESPQWLFKRGRAAEAEAVFEKLLGGSYVKAAMAELVKSDRGDDADSAKLSELLFGRSFRVVFIGSTLFALQQLSGINAVFYFSSTVFKKAGVPSASANICVGVCNLLGSTVAVVLMDKLGRKVLLIGSFAGMAVSLGLQAIAYTSLPSPFGTLFLSVGGMLLFVLSFATGAGPVPSLLLSEICPGRLRATALAVCLAVHWVINFFVGLLFLRMLEQLGSVLLNAIFGFFCVVAVIFVQKNVVETKGKSLQEIEISLLSSTQ.

12 helical membrane-spanning segments follow: residues 55 to 75 (LPHV…LGVV), 97 to 117 (LVVS…GLVA), 131 to 151 (LPMI…GMLL), 154 to 174 (FLVG…VTEV), 183 to 203 (YGSS…FAGI), 214 to 234 (ICFW…ELCV), 294 to 314 (VVFI…NAVF), 330 to 350 (SANI…VVLM), 357 to 377 (VLLI…AIAY), 384 to 404 (FGTL…FATG), 425 to 445 (ALAV…LLFL), and 451 to 471 (LGSV…VIFV).

This sequence belongs to the major facilitator superfamily. Sugar transporter (TC 2.A.1.1) family.

It localises to the plastid. The protein resides in the chloroplast membrane. Its function is as follows. May be involved in the efflux of glucose towards the cytosol. The sequence is that of Probable plastidic glucose transporter 3 from Arabidopsis thaliana (Mouse-ear cress).